Here is a 193-residue protein sequence, read N- to C-terminus: Activity-regulated cytoskeleton associated protein 2 (193 aa).

It belongs to the ARC/ARG3.1 family. In terms of assembly, homooligomer; homooligomerizes into virion-like capsids.

It is found in the extracellular vesicle membrane. Its function is as follows. Self-assembles into virion-like capsids that encapsulate RNAs and mediate intercellular RNA transfer. Arc2 protein is released from cells in extracellular vesicles that mediate the transfer of mRNA into neighboring cells. The chain is Activity-regulated cytoskeleton associated protein 2 from Drosophila melanogaster (Fruit fly).